Here is a 155-residue protein sequence, read N- to C-terminus: Putative pre-16S rRNA nuclease (155 aa).

Belongs to the YqgF nuclease family.

The protein localises to the cytoplasm. Its function is as follows. Could be a nuclease involved in processing of the 5'-end of pre-16S rRNA. In Corynebacterium jeikeium (strain K411), this protein is Putative pre-16S rRNA nuclease.